Reading from the N-terminus, the 404-residue chain is Pre-heme d1 synthase (404 aa).

One can recognise a Radical SAM core domain in the interval 22-235 (GTPKPVVIWN…LIARALESAE (214 aa)). [4Fe-4S] cluster-binding residues include Cys-36, Cys-40, Cys-43, Cys-340, Cys-343, Cys-349, and Cys-371.

Belongs to the radical SAM superfamily. [4Fe-4S] cluster is required as a cofactor.

The protein operates within porphyrin-containing compound metabolism. Its function is as follows. Involved in heme d1 biosynthesis. Radical SAM enzyme that catalyzes the removal of two propionate side chains from the intermediate 12,18-didecarboxysiroheme (DDSH) and may introduce the keto functions on rings A and B, yielding the heme d1 precursor dihydro-heme d1. In Dinoroseobacter shibae (strain DSM 16493 / NCIMB 14021 / DFL 12), this protein is Pre-heme d1 synthase.